Here is a 123-residue protein sequence, read N- to C-terminus: Large ribosomal subunit protein bL12 (123 aa).

Belongs to the bacterial ribosomal protein bL12 family. Homodimer. Part of the ribosomal stalk of the 50S ribosomal subunit. Forms a multimeric L10(L12)X complex, where L10 forms an elongated spine to which 2 to 4 L12 dimers bind in a sequential fashion. Binds GTP-bound translation factors.

Forms part of the ribosomal stalk which helps the ribosome interact with GTP-bound translation factors. Is thus essential for accurate translation. The chain is Large ribosomal subunit protein bL12 from Cytophaga hutchinsonii (strain ATCC 33406 / DSM 1761 / CIP 103989 / NBRC 15051 / NCIMB 9469 / D465).